The sequence spans 209 residues: Uracil phosphoribosyltransferase (209 aa).

Residues R79, R104, and 131–139 (DPMLATGGS) contribute to the 5-phospho-alpha-D-ribose 1-diphosphate site. Uracil contacts are provided by residues I194 and 199–201 (GDA). D200 is a binding site for 5-phospho-alpha-D-ribose 1-diphosphate.

It belongs to the UPRTase family. Mg(2+) is required as a cofactor.

It carries out the reaction UMP + diphosphate = 5-phospho-alpha-D-ribose 1-diphosphate + uracil. Its pathway is pyrimidine metabolism; UMP biosynthesis via salvage pathway; UMP from uracil: step 1/1. With respect to regulation, allosterically activated by GTP. Functionally, catalyzes the conversion of uracil and 5-phospho-alpha-D-ribose 1-diphosphate (PRPP) to UMP and diphosphate. This is Uracil phosphoribosyltransferase from Lactiplantibacillus plantarum (strain ATCC BAA-793 / NCIMB 8826 / WCFS1) (Lactobacillus plantarum).